Here is a 61-residue protein sequence, read N- to C-terminus: Small ribosomal subunit protein uS14 (61 aa).

Residues Cys-24, Cys-27, Cys-40, and Cys-43 each coordinate Zn(2+).

The protein belongs to the universal ribosomal protein uS14 family. Zinc-binding uS14 subfamily. Part of the 30S ribosomal subunit. Contacts proteins S3 and S10. Zn(2+) is required as a cofactor.

Binds 16S rRNA, required for the assembly of 30S particles and may also be responsible for determining the conformation of the 16S rRNA at the A site. This Streptococcus thermophilus (strain CNRZ 1066) protein is Small ribosomal subunit protein uS14.